A 320-amino-acid polypeptide reads, in one-letter code: Cilia- and flagella-associated protein 77 (320 aa).

The tract at residues 1 to 27 (MPEARSSGPDLTRWRKQQQPVRRTVSQ) is disordered. A compositionally biased stretch (polar residues) spans 17–27 (QQQPVRRTVSQ).

The protein belongs to the CFAP77 family. As to quaternary structure, microtubule inner protein component of sperm flagellar doublet microtubules. In terms of tissue distribution, expressed in airway epithelial cells.

The protein resides in the cytoplasm. It localises to the cytoskeleton. The protein localises to the cilium axoneme. Its subcellular location is the flagellum axoneme. Microtubule inner protein (MIP) part of the dynein-decorated doublet microtubules (DMTs) in cilia axoneme, which is required for motile cilia beating. This Homo sapiens (Human) protein is Cilia- and flagella-associated protein 77.